The chain runs to 441 residues: MQVSIETTSGLERRLTVGIPAEIIDQEVEKRLKQAAKTVRINGFRKGKVPFKVVKQRFGEGVRQEVLGDTIQRSFYDAVRQESVRPAGQPSIEPKQMDEGKDVEYIATFEVYPEVELKELDNIEITRYDAEITDADIDKMVETLQKGQSSWEPVKRKSKKGDKVTIDFLGKIDGEAFDGGEAKGHQLELGSGSMIPGFEKGITGMKAGETQPINVTFPDDYHVEDLRSKDAEFEITVHEVLGEKLPKLDEEFYAKFGVTEGGEEKFREEVKSNMEREKQRAIKAKVKEQVMNALLESNSVDLPAALVQSEIGAMRQQMVQQYGQSAQNLDLQALLPDDMFKAQAERRTALALIVSEVVKKYEVKADKDIVRSLIEEAASTYEDPQEVINYYYSNEQLLANVEAAALEEKVVELLLEKATVTDATVSYDEVIKPQEPQAEEA.

The region spanning 161 to 246 is the PPIase FKBP-type domain; that stretch reads GDKVTIDFLG…VHEVLGEKLP (86 aa).

This sequence belongs to the FKBP-type PPIase family. Tig subfamily.

Its subcellular location is the cytoplasm. The enzyme catalyses [protein]-peptidylproline (omega=180) = [protein]-peptidylproline (omega=0). Involved in protein export. Acts as a chaperone by maintaining the newly synthesized protein in an open conformation. Functions as a peptidyl-prolyl cis-trans isomerase. The polypeptide is Trigger factor (Teredinibacter turnerae (strain ATCC 39867 / T7901)).